Here is a 341-residue protein sequence, read N- to C-terminus: Methionine import ATP-binding protein MetN (341 aa).

The region spanning 6 to 247 (IEIKKLSKNF…PQHQATRHLL (242 aa)) is the ABC transporter domain. 44-51 (GMSGAGKS) serves as a coordination point for ATP.

This sequence belongs to the ABC transporter superfamily. Methionine importer (TC 3.A.1.24) family. In terms of assembly, the complex is composed of two ATP-binding proteins (MetN), two transmembrane proteins (MetI) and a solute-binding protein (MetQ).

It is found in the cell inner membrane. The catalysed reaction is L-methionine(out) + ATP + H2O = L-methionine(in) + ADP + phosphate + H(+). The enzyme catalyses D-methionine(out) + ATP + H2O = D-methionine(in) + ADP + phosphate + H(+). Functionally, part of the ABC transporter complex MetNIQ involved in methionine import. Responsible for energy coupling to the transport system. The polypeptide is Methionine import ATP-binding protein MetN (Protochlamydia amoebophila (strain UWE25)).